A 339-amino-acid polypeptide reads, in one-letter code: Uroporphyrinogen decarboxylase (339 aa).

Substrate contacts are provided by residues 21–25 (RQAGR), Asp-71, Tyr-147, Ser-202, and His-315.

The protein belongs to the uroporphyrinogen decarboxylase family. Homodimer.

It localises to the cytoplasm. It carries out the reaction uroporphyrinogen III + 4 H(+) = coproporphyrinogen III + 4 CO2. The protein operates within porphyrin-containing compound metabolism; protoporphyrin-IX biosynthesis; coproporphyrinogen-III from 5-aminolevulinate: step 4/4. Its function is as follows. Catalyzes the decarboxylation of four acetate groups of uroporphyrinogen-III to yield coproporphyrinogen-III. The polypeptide is Uroporphyrinogen decarboxylase (Helicobacter acinonychis (strain Sheeba)).